Reading from the N-terminus, the 687-residue chain is T-box transcription factor TBX2b (687 aa).

The segment at residues 103 to 276 (LWDQFHKLGT…NNPFAKGFRD (174 aa)) is a DNA-binding region (T-box). Disordered regions lie at residues 303-452 (DRDG…ESPS) and 611-687 (NLLT…DSPK). Basic and acidic residues-rich tracts occupy residues 338–357 (GSRDDKTCTDSEHEMDHQND), 375–400 (SRSEDWGREKPIAEKKDDYPDSRKTS), and 408–430 (NLEKDKLESRSRKDTDSSKKDTE). Polar residues-rich tracts occupy residues 431-451 (NSGISGSKDSFSPLMVQTESP), 611-630 (NLLTTGLPSGLNPSSESSKC), and 644-654 (GASQRNGSPKT). The stretch at 654 to 681 (TTMKESINELQNIQRLVSGLESQRETSS) forms a coiled coil. Residues 675-687 (SQRETSSPRDSPK) show a composition bias toward basic and acidic residues.

In terms of assembly, binds DNA as a monomer. In terms of tissue distribution, expressed in the axial mesoderm, notably, in the notochordal precursor cells immediately before formation of the notochord and in the chordoneural hinge of the tail bud, after the notochord is formed. In addition, its expression is detected in the ventral forebrain, sensory neurons, fin buds and excretory system.

Its subcellular location is the nucleus. Its function is as follows. Transcription factor which acts as a transcriptional repressor. May also function as a transcriptional activator. Binds to the palindromic T site 5'-TTCACACCTAGGTGTGAA-3' DNA sequence, or a half-site, which are present in the regulatory region of several genes. Involved in the transcriptional regulation of genes required for mesoderm differentiation. Plays a role in the specification of late notochordal precursor cells and formation of the differentiated notochord. Required for cardiac atrioventricular canal formation. The chain is T-box transcription factor TBX2b (tbx2b) from Danio rerio (Zebrafish).